The chain runs to 217 residues: MSPRQQPRRIARELALLSLSQIKGNPENLEQQTLNDLILVAVRTLTLEIQETLETAAAEISRGNERILASDTKATNLKSAQTMVKEAISLTHNAINRLGTVIDFPEIVQLSSQYEVREYALELIGTVYRRRAEIEQELTGALVDWQLHRLPRIDRDILQIAVAEMLYLDLPQKVAINEAIELAKRYSDDEGYRFINGVLRRVTNKLNESEKAVSTQS.

The protein belongs to the NusB family.

In terms of biological role, involved in transcription antitermination. Required for transcription of ribosomal RNA (rRNA) genes. Binds specifically to the boxA antiterminator sequence of the ribosomal RNA (rrn) operons. In Microcystis aeruginosa (strain NIES-843 / IAM M-2473), this protein is Transcription antitermination protein NusB.